Here is a 419-residue protein sequence, read N- to C-terminus: UDP-N-acetylglucosamine 1-carboxyvinyltransferase 2 (419 aa).

22–23 serves as a coordination point for phosphoenolpyruvate; it reads KN. Residue Arg92 participates in UDP-N-acetyl-alpha-D-glucosamine binding. Asp116 acts as the Proton donor in catalysis. Residues 121–125, Asp306, and Leu328 contribute to the UDP-N-acetyl-alpha-D-glucosamine site; that span reads RPIDQ.

It belongs to the EPSP synthase family. MurA subfamily.

It is found in the cytoplasm. The catalysed reaction is phosphoenolpyruvate + UDP-N-acetyl-alpha-D-glucosamine = UDP-N-acetyl-3-O-(1-carboxyvinyl)-alpha-D-glucosamine + phosphate. Its pathway is cell wall biogenesis; peptidoglycan biosynthesis. Cell wall formation. Adds enolpyruvyl to UDP-N-acetylglucosamine. The sequence is that of UDP-N-acetylglucosamine 1-carboxyvinyltransferase 2 from Latilactobacillus sakei subsp. sakei (strain 23K) (Lactobacillus sakei subsp. sakei).